We begin with the raw amino-acid sequence, 436 residues long: UPF0597 protein YhaM (436 aa).

This sequence belongs to the UPF0597 family.

In Escherichia coli (strain 55989 / EAEC), this protein is UPF0597 protein YhaM.